Reading from the N-terminus, the 216-residue chain is Uracil phosphoribosyltransferase (216 aa).

5-phospho-alpha-D-ribose 1-diphosphate contacts are provided by residues Arg84, Arg109, and Asp137–Thr145. Residues Ile202 and Gly207–Ala209 each bind uracil. Asp208 lines the 5-phospho-alpha-D-ribose 1-diphosphate pocket.

Belongs to the UPRTase family. Mg(2+) is required as a cofactor.

The enzyme catalyses UMP + diphosphate = 5-phospho-alpha-D-ribose 1-diphosphate + uracil. It functions in the pathway pyrimidine metabolism; UMP biosynthesis via salvage pathway; UMP from uracil: step 1/1. Allosterically activated by GTP. Functionally, catalyzes the conversion of uracil and 5-phospho-alpha-D-ribose 1-diphosphate (PRPP) to UMP and diphosphate. This chain is Uracil phosphoribosyltransferase, found in Synechocystis sp. (strain ATCC 27184 / PCC 6803 / Kazusa).